The sequence spans 545 residues: Sensory neuron membrane protein 1 (545 aa).

Over 1-10 (MELKERNFKK) the chain is Cytoplasmic. A helical transmembrane segment spans residues 11–31 (IGLICVAVLLCGMVFSYGIFP). The Extracellular portion of the chain corresponds to 32–464 (SILRFMIKQN…LFLGLKFNAT (433 aa)). N-linked (GlcNAc...) asparagine glycans are attached at residues Asn-69, Asn-214, and Asn-227. Disulfide bonds link Cys-266-Cys-331, Cys-295-Cys-351, and Cys-333-Cys-340. Residues Asn-444 and Asn-462 are each glycosylated (N-linked (GlcNAc...) asparagine). A helical membrane pass occupies residues 465-485 (VKWLTIIIGTVGAVGSAYMYF). Residues 486-545 (RKETKTTDVAPVDVSTPDTNPSSAKDGVVNVSLGRNLPPVIDGLDKPPKLRATELQQERY) are Cytoplasmic-facing.

Belongs to the CD36 family. Selectively expressed in antenna.

It is found in the cell membrane. Its function is as follows. Plays an olfactory role that is not restricted to pheromone sensitivity. This Anopheles gambiae (African malaria mosquito) protein is Sensory neuron membrane protein 1 (snmp1).